Reading from the N-terminus, the 399-residue chain is Interferon regulatory factor 9 (399 aa).

Residues 9–116 (TRKLRSWIVE…EPYKVYRILP (108 aa)) constitute a DNA-binding region (IRF tryptophan pentad repeat). The interval 118–189 (GTLPNQPRNQ…CNSELEEGAG (72 aa)) is disordered. A compositionally biased stretch (polar residues) spans 120-129 (LPNQPRNQKS). Residue serine 139 is modified to Phosphoserine. Over residues 148–157 (NGRTNGVVNH) the composition is skewed to polar residues. A compositionally biased stretch (low complexity) spans 171–189 (SNRSDSNSNCNSELEEGAG). Serine 393 bears the Phosphoserine mark.

The protein belongs to the IRF family. In terms of assembly, interacts with STAT2 in the cytoplasm. Forms the interferon-stimulated gene factor 3 complex (ISGF3) with the heterodimer STAT1:STAT2; upon stimulation.

The protein localises to the nucleus. Its function is as follows. Transcription factor that plays an essential role in anti-viral immunity. It mediates signaling by type I IFNs (IFN-alpha and IFN-beta). Following type I IFN binding to cell surface receptors, Jak kinases (TYK2 and JAK1) are activated, leading to tyrosine phosphorylation of STAT1 and STAT2. IRF9/ISGF3G associates with the phosphorylated STAT1:STAT2 dimer to form a complex termed ISGF3 transcription factor, that enters the nucleus. ISGF3 binds to the IFN stimulated response element (ISRE) to activate the transcription of interferon stimulated genes, which drive the cell in an antiviral state. The protein is Interferon regulatory factor 9 (Irf9) of Mus musculus (Mouse).